A 491-amino-acid chain; its full sequence is Argininosuccinate lyase (491 aa).

Belongs to the lyase 1 family. Argininosuccinate lyase subfamily.

It is found in the cytoplasm. The enzyme catalyses 2-(N(omega)-L-arginino)succinate = fumarate + L-arginine. It participates in amino-acid biosynthesis; L-arginine biosynthesis; L-arginine from L-ornithine and carbamoyl phosphate: step 3/3. This Methanosarcina mazei (strain ATCC BAA-159 / DSM 3647 / Goe1 / Go1 / JCM 11833 / OCM 88) (Methanosarcina frisia) protein is Argininosuccinate lyase.